Consider the following 114-residue polypeptide: Large ribosomal subunit protein uL22 (114 aa).

This sequence belongs to the universal ribosomal protein uL22 family. Part of the 50S ribosomal subunit.

Its function is as follows. This protein binds specifically to 23S rRNA; its binding is stimulated by other ribosomal proteins, e.g. L4, L17, and L20. It is important during the early stages of 50S assembly. It makes multiple contacts with different domains of the 23S rRNA in the assembled 50S subunit and ribosome. In terms of biological role, the globular domain of the protein is located near the polypeptide exit tunnel on the outside of the subunit, while an extended beta-hairpin is found that lines the wall of the exit tunnel in the center of the 70S ribosome. This is Large ribosomal subunit protein uL22 from Streptococcus agalactiae serotype Ia (strain ATCC 27591 / A909 / CDC SS700).